Consider the following 369-residue polypeptide: Phosphatidylglycerol--prolipoprotein diacylglyceryl transferase (369 aa).

The next 3 membrane-spanning stretches (helical) occupy residues 26-46, 60-80, and 97-117; these read YYGILYATGILVAIIAGILTL, YVFIGIISIIFGARTWSFIIG, and LAIQGGVIFTITTGLIFFFFI. Position 167 (arginine 167) interacts with a 1,2-diacyl-sn-glycero-3-phospho-(1'-sn-glycerol). Transmembrane regions (helical) follow at residues 216–236 and 273–293; these read VPIFLIESFFNVIAFIIIVFL and FVTSIVTSVLFLLGGSIGFIF.

Belongs to the Lgt family.

It localises to the cell membrane. The catalysed reaction is L-cysteinyl-[prolipoprotein] + a 1,2-diacyl-sn-glycero-3-phospho-(1'-sn-glycerol) = an S-1,2-diacyl-sn-glyceryl-L-cysteinyl-[prolipoprotein] + sn-glycerol 1-phosphate + H(+). It functions in the pathway protein modification; lipoprotein biosynthesis (diacylglyceryl transfer). Its function is as follows. Catalyzes the transfer of the diacylglyceryl group from phosphatidylglycerol to the sulfhydryl group of the N-terminal cysteine of a prolipoprotein, the first step in the formation of mature lipoproteins. This is Phosphatidylglycerol--prolipoprotein diacylglyceryl transferase from Mycoplasmoides gallisepticum (strain R(low / passage 15 / clone 2)) (Mycoplasma gallisepticum).